We begin with the raw amino-acid sequence, 557 residues long: 2-isopropylmalate synthase (557 aa).

Positions Pro33 to Asp307 constitute a Pyruvate carboxyltransferase domain. Mg(2+) is bound by residues Asp42, His246, His248, and Asn282. The interval Ala439–Ala557 is regulatory domain.

It belongs to the alpha-IPM synthase/homocitrate synthase family. LeuA type 2 subfamily. Homodimer. Mg(2+) serves as cofactor.

The protein resides in the cytoplasm. The catalysed reaction is 3-methyl-2-oxobutanoate + acetyl-CoA + H2O = (2S)-2-isopropylmalate + CoA + H(+). It functions in the pathway amino-acid biosynthesis; L-leucine biosynthesis; L-leucine from 3-methyl-2-oxobutanoate: step 1/4. In terms of biological role, catalyzes the condensation of the acetyl group of acetyl-CoA with 3-methyl-2-oxobutanoate (2-ketoisovalerate) to form 3-carboxy-3-hydroxy-4-methylpentanoate (2-isopropylmalate). In Azotobacter vinelandii (strain DJ / ATCC BAA-1303), this protein is 2-isopropylmalate synthase.